The sequence spans 525 residues: Cytochrome P450 4V2 (525 aa).

Residues L13 to I33 traverse the membrane as a helical segment. E329 and C467 together coordinate heme.

This sequence belongs to the cytochrome P450 family. Requires heme as cofactor.

Its subcellular location is the endoplasmic reticulum membrane. It carries out the reaction dodecanoate + reduced [NADPH--hemoprotein reductase] + O2 = 12-hydroxydodecanoate + oxidized [NADPH--hemoprotein reductase] + H2O + H(+). The enzyme catalyses tetradecanoate + reduced [NADPH--hemoprotein reductase] + O2 = 14-hydroxytetradecanoate + oxidized [NADPH--hemoprotein reductase] + H2O + H(+). The catalysed reaction is hexadecanoate + reduced [NADPH--hemoprotein reductase] + O2 = 16-hydroxyhexadecanoate + oxidized [NADPH--hemoprotein reductase] + H2O + H(+). It catalyses the reaction (5Z,8Z,11Z,14Z,17Z)-eicosapentaenoate + reduced [NADPH--hemoprotein reductase] + O2 = 20-hydroxy-(5Z,8Z,11Z,14Z,17Z)-eicosapentaenoate + oxidized [NADPH--hemoprotein reductase] + H2O + H(+). It carries out the reaction (4Z,7Z,10Z,13Z,16Z,19Z)-docosahexaenoate + reduced [NADPH--hemoprotein reductase] + O2 = 22-hydroxy-(4Z,7Z,10Z,13Z,16Z,19Z)-docosahexaenoate + oxidized [NADPH--hemoprotein reductase] + H2O + H(+). It participates in lipid metabolism; fatty acid metabolism. With respect to regulation, inhibited by N-hydroxy-N'-(4-n-butyl-2-methylphenyl formamidine)(HET0016) with an IC(50) of 38 nM. Its function is as follows. A cytochrome P450 monooxygenase involved in fatty acid metabolism in the eye. Catalyzes the omega-hydroxylation of polyunsaturated fatty acids (PUFAs) docosahexaenoate (DHA) and its precursor eicosapentaenoate (EPA), and may contribute to the homeostasis of these retinal PUFAs. Omega hydroxylates saturated fatty acids such as laurate, myristate and palmitate, the catalytic efficiency decreasing in the following order: myristate &gt; laurate &gt; palmitate (C14&gt;C12&gt;C16). Mechanistically, uses molecular oxygen inserting one oxygen atom into a substrate, and reducing the second into a water molecule, with two electrons provided by NADPH via cytochrome P450 reductase (CPR; NADPH-ferrihemoprotein reductase). The polypeptide is Cytochrome P450 4V2 (Cyp4v2) (Rattus norvegicus (Rat)).